We begin with the raw amino-acid sequence, 254 residues long: Probable phosphatase TTE1963 (254 aa).

Histidine 14, histidine 16, histidine 22, histidine 47, glutamate 80, histidine 108, histidine 139, aspartate 200, and histidine 202 together coordinate Zn(2+).

Belongs to the PHP family. The cofactor is Zn(2+).

The protein is Probable phosphatase TTE1963 of Caldanaerobacter subterraneus subsp. tengcongensis (strain DSM 15242 / JCM 11007 / NBRC 100824 / MB4) (Thermoanaerobacter tengcongensis).